Here is a 337-residue protein sequence, read N- to C-terminus: tRNA N6-adenosine threonylcarbamoyltransferase (337 aa).

Residues His111 and His115 each coordinate Fe cation. Substrate contacts are provided by residues 134–138 (LVSGG), Asp167, Gly180, and Asn272. Asp300 contributes to the Fe cation binding site.

It belongs to the KAE1 / TsaD family. Fe(2+) is required as a cofactor.

It localises to the cytoplasm. It catalyses the reaction L-threonylcarbamoyladenylate + adenosine(37) in tRNA = N(6)-L-threonylcarbamoyladenosine(37) in tRNA + AMP + H(+). Required for the formation of a threonylcarbamoyl group on adenosine at position 37 (t(6)A37) in tRNAs that read codons beginning with adenine. Is involved in the transfer of the threonylcarbamoyl moiety of threonylcarbamoyl-AMP (TC-AMP) to the N6 group of A37, together with TsaE and TsaB. TsaD likely plays a direct catalytic role in this reaction. This chain is tRNA N6-adenosine threonylcarbamoyltransferase, found in Salmonella agona (strain SL483).